A 179-amino-acid chain; its full sequence is uncharacterized protein (179 aa).

This is an uncharacterized protein from Rickettsia conorii (strain ATCC VR-613 / Malish 7).